A 108-amino-acid chain; its full sequence is UPF0145 protein HDEF_1024 (108 aa).

Belongs to the UPF0145 family.

The sequence is that of UPF0145 protein HDEF_1024 from Hamiltonella defensa subsp. Acyrthosiphon pisum (strain 5AT).